We begin with the raw amino-acid sequence, 384 residues long: Eukaryotic translation initiation factor 3 subunit M (384 aa).

A PCI domain is found at 184–346 (ENRKAIEAMI…KKILITGAFP (163 aa)).

The protein belongs to the eIF-3 subunit M family. As to quaternary structure, component of the eukaryotic translation initiation factor 3 (eIF-3) complex.

The protein resides in the cytoplasm. Functionally, component of the eukaryotic translation initiation factor 3 (eIF-3) complex, which is involved in protein synthesis of a specialized repertoire of mRNAs and, together with other initiation factors, stimulates binding of mRNA and methionyl-tRNAi to the 40S ribosome. The eIF-3 complex specifically targets and initiates translation of a subset of mRNAs involved in cell proliferation. The protein is Eukaryotic translation initiation factor 3 subunit M of Schistosoma japonicum (Blood fluke).